The primary structure comprises 913 residues: Protein SEY1 homolog (913 aa).

Topologically, residues 1-825 (MANASKTQII…ETGGQMSLKN (825 aa)) are cytoplasmic. One can recognise a GB1/RHD3-type G domain in the interval 33-288 (GFNYNVIAIL…IPADGFAQYC (256 aa)). Residue 43 to 50 (GSQSSGKS) participates in GTP binding. Disordered stretches follow at residues 89–108 (AGGS…GDKP) and 436–455 (TEQD…AKKG). Coiled-coil stretches lie at residues 636–659 (DDEN…MESL) and 703–727 (IEII…VIIN). The chain crosses the membrane as a helical span at residues 826–846 (VPFAFWVILLILGWNEILMFT). Topologically, residues 847–849 (RLF) are lumenal. Residues 850–870 (FRLNIILPMFMAFIIIVGSCL) form a helical membrane-spanning segment. The Cytoplasmic segment spans residues 871–913 (YTGNAQVLSYLNKIAFIVIKHSYNFYKHLQTVGNQPTKPEKVD).

The protein belongs to the TRAFAC class dynamin-like GTPase superfamily. GB1/RHD3 GTPase family. RHD3 subfamily.

Its subcellular location is the endoplasmic reticulum membrane. Its function is as follows. Probable GTP-binding protein involved in generating and maintaining the structure of the tubular endoplasmic reticulum network. The polypeptide is Protein SEY1 homolog (Plasmodium chabaudi chabaudi).